Consider the following 1060-residue polypeptide: RNA-binding protein 27 (1060 aa).

Disordered regions lie at residues 80 to 143 (PLEP…DGKW), 160 to 278 (YDWR…PKRR), and 319 to 416 (PPPG…PPPL). Basic and acidic residues-rich tracts occupy residues 84–102 (VKPEPKPLVQEKEEIKEEV) and 124–143 (SRSESSERRTREKKREDGKW). The segment covering 165 to 185 (GRSKSRSKSRGLSRSRSRSRG) has biased composition (basic residues). Residues 186-211 (RSKDRDPNRNVEHRERSKFKSERNDL) are compositionally biased toward basic and acidic residues. 2 stretches are compositionally biased toward low complexity: residues 225-235 (SSEQYSSGAQS) and 255-268 (SWSNYYNNHSSSNS). A C3H1-type zinc finger spans residues 273–301 (PPPKRRCRDYDERGFCVLGDLCQFDHGND). Composition is skewed to pro residues over residues 319–356 (PPPGLPPPPPPGMLMPPMPGPGPGPGPGPGPGPGPGPG) and 371–384 (QPPPSVVLPIPRPP). A compositionally biased stretch (polar residues) spans 387-402 (QSSLINSRDQPGTSAV). Thr447 carries the phosphothreonine modification. Arg455 bears the Omega-N-methylarginine mark. Residues 572–594 (LTKKPWLGKQGNNNQSKPGFLRK) are disordered. Positions 600-674 (TKLEVKKIPQ…RFIRVLWHRE (75 aa)) constitute an RRM domain. The disordered stretch occupies residues 754–775 (HASTNQSDTSHLLNQTGGSSGE). The span at 755-770 (ASTNQSDTSHLLNQTG) shows a compositional bias: polar residues. The stretch at 810–887 (VQEVLKKKQE…KDELKTSSTV (78 aa)) forms a coiled coil. Ser928 carries the post-translational modification Phosphoserine. Residues 943-982 (GRGKTISSQGRGRGRGRGRGRGSLNHMVVDHRPKALPGGG) form a disordered region. Phosphoserine is present on residues Ser1012 and Ser1020. Residues 1014–1060 (HKPKVPSISTETEEEEVKEEETETSDLFLHDDDDEDEDEYESRSWRR) are disordered. Composition is skewed to acidic residues over residues 1024-1037 (ETEEEEVKEEETET) and 1044-1053 (DDDDEDEDEY).

It is found in the cytoplasm. Its subcellular location is the nucleus speckle. Its function is as follows. May be involved in the turnover of nuclear polyadenylated (pA+) RNA. This Mus musculus (Mouse) protein is RNA-binding protein 27.